Here is a 353-residue protein sequence, read N- to C-terminus: 2-Hydroxyacid oxidase 2 (353 aa).

Residues 2-353 form the FMN hydroxy acid dehydrogenase domain; it reads PLVCLADFKA…SPDLIQFSRL (352 aa). Residues 77-79, S106, and Q128 contribute to the FMN site; that span reads PTA. Y130 serves as a coordination point for a 2-oxocarboxylate. Residue S133 is modified to Phosphoserine. T156 serves as a coordination point for FMN. R165 is an a 2-oxocarboxylate binding site. FMN is bound at residue K224. H248 serves as the catalytic Proton acceptor. Residue R251 participates in a 2-oxocarboxylate binding. FMN-binding positions include 279-283 and 302-303; these read DGGVR and GR. The Microbody targeting signal motif lies at 351-353; the sequence is SRL.

This sequence belongs to the FMN-dependent alpha-hydroxy acid dehydrogenase family. In terms of assembly, homotetramer. Could also form homooctamer. Requires FMN as cofactor. As to expression, expressed in kidney.

It localises to the peroxisome. The enzyme catalyses a (2S)-2-hydroxycarboxylate + O2 = a 2-oxocarboxylate + H2O2. It catalyses the reaction 2-hydroxyoctanoate + O2 = 2-oxooctanoate + H2O2. It carries out the reaction 2-hydroxyhexadecanoate + O2 = 2-oxohexadecanoate + H2O2. The catalysed reaction is 2-hydroxyhexanoate + O2 = 2-oxohexanoate + H2O2. The enzyme catalyses mandelate + O2 = phenylglyoxylate + H2O2. Its activity is regulated as follows. Is inhibited in vitro by CCPST (4-carboxy-5-(4-chlorophenyl)sulfanyl-1,2,3-thiadiazole). Oxidase that catalyzes the oxidation of medium and long chain hydroxyacids such as 2-hydroxyhexadecanoate, 2-hydroxyoctanoate, 2-hydroxyhexanoate and 2-hydroxybutanoate, to the correspondong 2-oxoacids. Its role in the oxidation of 2-hydroxy fatty acids may contribute to the general pathway of fatty acid alpha-oxidation. Can also use mandelate as substrate. Active in vitro with the artificial electron acceptor 2,6-dichlorophenolindophenol (DCIP), but O2 is believed to be the physiological electron acceptor, leading to the production of H2O2. This is 2-Hydroxyacid oxidase 2 (Hao2) from Rattus norvegicus (Rat).